Here is a 535-residue protein sequence, read N- to C-terminus: Secreted lipase 5 (535 aa).

The N-terminal stretch at 1–17 (MHLKSLLLAALPLLLEA) is a signal peptide. Residues asparagine 32 and asparagine 119 are each glycosylated (N-linked (GlcNAc...) asparagine). The active-site Acyl-ester intermediate is the serine 241. Asparagine 282, asparagine 341, asparagine 347, and asparagine 432 each carry an N-linked (GlcNAc...) asparagine glycan.

This sequence belongs to the type-B carboxylesterase/lipase family.

Its subcellular location is the secreted. The catalysed reaction is a carboxylic ester + H2O = an alcohol + a carboxylate + H(+). Secreted lipase involved in plant virulence. Has a substrate preference for p-nitrophenyl esters with a carbon chain length of C8 (p-nitrophenyl caprylate). The sequence is that of Secreted lipase 5 from Gibberella zeae (strain ATCC MYA-4620 / CBS 123657 / FGSC 9075 / NRRL 31084 / PH-1) (Wheat head blight fungus).